The following is a 373-amino-acid chain: Transmembrane protein adipocyte-associated 1 (373 aa).

N-linked (GlcNAc...) asparagine glycans are attached at residues asparagine 11 and asparagine 23. A run of 7 helical transmembrane segments spans residues 48–68 (LLLLIPNVLFLIFLLWKLPSA), 76–96 (SSPIFITFYILVFVVALVGIA), 123–143 (FFLLAIELSVIILGLAFGHLE), 151–171 (VLAITTVLSLAYSVTQGTLEI), 192–212 (QFWLVSSCFFFLVYSLVVILP), 234–254 (ILALLNLLQGLGSVLLCFDII), and 265–285 (FLYFSFFAPLIYVAFLRGFFG). Asparagine 361 is a glycosylation site (N-linked (GlcNAc...) asparagine).

The protein belongs to the UPF0359 family. Ubiquitous, with higher levels in heart, placenta and kidney.

Its subcellular location is the membrane. The chain is Transmembrane protein adipocyte-associated 1 (TPRA1) from Homo sapiens (Human).